The following is a 430-amino-acid chain: Adenylosuccinate synthetase (430 aa).

Residues 12–18 (GDEGKGK) and 40–42 (GHT) each bind GTP. Aspartate 13 functions as the Proton acceptor in the catalytic mechanism. Mg(2+) is bound by residues aspartate 13 and glycine 40. IMP-binding positions include 13-16 (DEGK), 38-41 (NAGH), threonine 128, arginine 142, glutamine 223, threonine 238, and arginine 302. Catalysis depends on histidine 41, which acts as the Proton donor. Residue 298 to 304 (TTTGRPR) coordinates substrate. GTP is bound by residues arginine 304, 330–332 (LLD), and 412–414 (SVG).

It belongs to the adenylosuccinate synthetase family. In terms of assembly, homodimer. Mg(2+) serves as cofactor.

The protein resides in the cytoplasm. The catalysed reaction is IMP + L-aspartate + GTP = N(6)-(1,2-dicarboxyethyl)-AMP + GDP + phosphate + 2 H(+). Its pathway is purine metabolism; AMP biosynthesis via de novo pathway; AMP from IMP: step 1/2. Its function is as follows. Plays an important role in the de novo pathway of purine nucleotide biosynthesis. Catalyzes the first committed step in the biosynthesis of AMP from IMP. The sequence is that of Adenylosuccinate synthetase from Listeria monocytogenes serovar 1/2a (strain ATCC BAA-679 / EGD-e).